The chain runs to 134 residues: Small ribosomal subunit protein uS8 (134 aa).

It belongs to the universal ribosomal protein uS8 family. As to quaternary structure, part of the 30S ribosomal subunit. Contacts proteins S5 and S12.

Functionally, one of the primary rRNA binding proteins, it binds directly to 16S rRNA central domain where it helps coordinate assembly of the platform of the 30S subunit. The polypeptide is Small ribosomal subunit protein uS8 (Pseudothermotoga lettingae (strain ATCC BAA-301 / DSM 14385 / NBRC 107922 / TMO) (Thermotoga lettingae)).